We begin with the raw amino-acid sequence, 601 residues long: DNA replication licensing factor MCM3 (601 aa).

The region spanning Pro-180–Leu-386 is the MCM domain. Gly-229 to Ser-236 serves as a coordination point for ATP. Residues Ser-361–Asp-364 carry the Arginine finger motif.

This sequence belongs to the MCM family. In terms of assembly, component of the MCM2-7 complex.

The protein resides in the nucleus. It is found in the chromosome. The protein localises to the nucleoplasm. The catalysed reaction is ATP + H2O = ADP + phosphate + H(+). Its function is as follows. Acts as a component of the MCM2-7 complex (MCM complex) which is the replicative helicase essential for DNA replication initiation and elongation in eukaryotic cells. Required for DNA replication and cell proliferation. The active ATPase sites in the MCM2-7 ring are formed through the interaction surfaces of two neighboring subunits such that a critical structure of a conserved arginine finger motif is provided in trans relative to the ATP-binding site of the Walker A box of the adjacent subunit. The sequence is that of DNA replication licensing factor MCM3 from Entamoeba histolytica (strain ATCC 30459 / HM-1:IMSS / ABRM).